A 59-amino-acid polypeptide reads, in one-letter code: UPF0434 protein Sputw3181_2540 (59 aa).

This sequence belongs to the UPF0434 family.

This is UPF0434 protein Sputw3181_2540 from Shewanella sp. (strain W3-18-1).